Here is a 269-residue protein sequence, read N- to C-terminus: MTPLQILISNDDGVLAEGVRCLAAAAASRGHRVTVVCPDHERSATGHGLTIHTPIRAERVDELYGPGVKAWSCSGTPADCVKLALSELLAEKPDLVLSGVNHGPNLGTDVFCSGTVAAAMEGTLEGLPALAVSVACFQWRDFQAAAQLAMDVAENALADHWPNNLLLNLNIPPCHLEQMGSLRWTRLSIRHYEEQFSRRVDPHSRTYFWLAGEVVKDLETAGDGPRDWPSDVAQIETNSPSLTPIQPDLFWRGDLSALPAACVANQPVR.

Residues D11, D12, S43, and N101 each contribute to the a divalent metal cation site.

The protein belongs to the SurE nucleotidase family. Requires a divalent metal cation as cofactor.

The protein resides in the cytoplasm. The enzyme catalyses a ribonucleoside 5'-phosphate + H2O = a ribonucleoside + phosphate. Nucleotidase that shows phosphatase activity on nucleoside 5'-monophosphates. The chain is 5'-nucleotidase SurE from Prochlorococcus marinus (strain MIT 9313).